Here is a 259-residue protein sequence, read N- to C-terminus: MKLSVKIAGVLTVAAAAMTAKMYATAKGNHLKTHTFPLSKMKGKPPLTIFFISDIHKRLIDQDLLEKARSHAPHLVIIGGDLAEGGVPSARIEENIKRLVHFGVPIVFVWGNNDYEVRQHKLYSIFKAHGVITLRNESVPFSYNGHTIAIAGVDDIRMEMDHYEEAIKELDESQLNILVCHNPEIHEQINEDDGIDVILSGHTHGGQIRFGKFGPYELGKTGIVKNAAYLISNGYGTTKVPLRLGAEPETHIVTLCGPE.

A signal peptide (or 26) is located at residues 1-19; that stretch reads MKLSVKIAGVLTVAAAAMT. 214–221 contributes to the ATP binding site; sequence GPYELGKT.

This is an uncharacterized protein from Bacillus subtilis (strain 168).